The sequence spans 266 residues: 15-hydroxyprostaglandin dehydrogenase [NAD(+)] (266 aa).

NAD(+) contacts are provided by residues 12–20 (GAAQGIGRA), 36–37 (DW), 63–65 (CDV), and Asn-91. 2 residues coordinate substrate: Ser-138 and Gln-148. The Proton acceptor role is filled by Tyr-151. Residues 151–155 (YCASK) and 186–188 (VNT) each bind NAD(+).

The protein belongs to the short-chain dehydrogenases/reductases (SDR) family. Homodimer.

Its subcellular location is the cytoplasm. The catalysed reaction is prostaglandin E2 + NAD(+) = 15-oxoprostaglandin E2 + NADH + H(+). It catalyses the reaction (15S)-hydroxy-(5Z,8Z,11Z,13E)-eicosatetraenoate + NAD(+) = 15-oxo-(5Z,8Z,11Z,13E)-eicosatetraenoate + NADH + H(+). The enzyme catalyses (11R)-hydroxy-(5Z,8Z,12E,14Z)-eicosatetraenoate + NAD(+) = 11-oxo-(5Z,8Z,12E,14Z)-eicosatetraenoate + NADH + H(+). It carries out the reaction lipoxin A4 + NAD(+) = 15-oxo-(5S,6R)-dihydroxy-(7E,9E,11Z,13E)-eicosatetraenoate + NADH + H(+). The catalysed reaction is 15-oxo-(5S,6R)-dihydroxy-(7E,9E,11Z)-eicosatrienoate + NADH + H(+) = (5S,6R,15S)-trihydroxy-(7E,9E,11Z)-eicosatrienoate + NAD(+). It catalyses the reaction prostaglandin A1 + NAD(+) = 15-oxo-prostaglandin A1 + NADH + H(+). The enzyme catalyses prostaglandin E1 + NAD(+) = 15-oxoprostaglandin E1 + NADH + H(+). It carries out the reaction 14-hydroxy-(4Z,7Z,10Z,12E,16Z,19Z)-docosahexaenoate + NAD(+) = 14-oxo-(4Z,7Z,10Z,12E,16Z,19Z)-docosahexaenoate + NADH + H(+). The catalysed reaction is resolvin E1 + NAD(+) = 18-oxo-resolvin E1 + NADH + H(+). It catalyses the reaction resolvin D1 + NAD(+) = 8-oxoresolvin D1 + NADH + H(+). The enzyme catalyses resolvin D1 + NAD(+) = 17-oxoresolvin D1 + NADH + H(+). It carries out the reaction resolvin D2 + NAD(+) = 7-oxoresolvin D2 + NADH + H(+). The catalysed reaction is resolvin D2 + NAD(+) = 16-oxoresolvin D2 + NADH + H(+). Catalyzes the NAD-dependent dehydrogenation (oxidation) of a broad array of hydroxylated polyunsaturated fatty acids (mainly eicosanoids and docosanoids, including prostaglandins, lipoxins and resolvins), yielding their corresponding keto (oxo) metabolites. Decreases the levels of the pro-proliferative prostaglandins such as prostaglandin E2 (whose activity is increased in cancer because of an increase in the expression of cyclooxygenase 2) and generates oxo-fatty acid products that can profoundly influence cell function by abrogating pro-inflammatory cytokine expression. Converts resolvins E1, D1 and D2 to their oxo products, which represents a mode of resolvin inactivation. Resolvin E1 plays important roles during the resolution phase of acute inflammation, while resolvins D1 and D2 have a unique role in obesity-induced adipose inflammation. This Macaca fascicularis (Crab-eating macaque) protein is 15-hydroxyprostaglandin dehydrogenase [NAD(+)] (HPGD).